The primary structure comprises 235 residues: MGRAFEYRRASKEARWDKMSKLFPKLAKAIQVAAKEGGTDPDMNPKLRSAIATAKANNMPKDNIDAAIKRASGKDSADIKNIHYEGKAAHGALVIVECMSDNPTRTVANVKAIFSKNGGEVLQNGSLGFMFTRKAVFHLEKFAGDLEELELDLIDAGLEELEQNEEELVISGDYTAFGELSSAIEAKGLVLKKAGLEYIPNNPVSFSEEQLSDIEKLLDKLEDDDDVQAVYTNID.

Belongs to the TACO1 family.

The protein resides in the cytoplasm. The polypeptide is Probable transcriptional regulatory protein Cj1172c (Campylobacter jejuni subsp. jejuni serotype O:2 (strain ATCC 700819 / NCTC 11168)).